The sequence spans 130 residues: Small ribosomal subunit protein uS9 (130 aa).

Belongs to the universal ribosomal protein uS9 family.

The polypeptide is Small ribosomal subunit protein uS9 (Idiomarina loihiensis (strain ATCC BAA-735 / DSM 15497 / L2-TR)).